A 91-amino-acid chain; its full sequence is MARMVFCRKYKQQLEGLDFPPYPGAKGQDLFDNVSKKAWQEWMAHQTMLINEKRLNVMDMGTKVYLTEQMHKFLSGEGYDQADGYVPPSNQ.

It belongs to the Fe(2+)-trafficking protein family.

Functionally, could be a mediator in iron transactions between iron acquisition and iron-requiring processes, such as synthesis and/or repair of Fe-S clusters in biosynthetic enzymes. This is Probable Fe(2+)-trafficking protein from Cellvibrio japonicus (strain Ueda107) (Pseudomonas fluorescens subsp. cellulosa).